A 220-amino-acid polypeptide reads, in one-letter code: 5-hmdU DNA kinase 1 (220 aa).

This sequence belongs to the thymidylate kinase family. 5-hmdU DNA kinase subfamily.

The catalysed reaction is 5-hydroxymethyl-dUMP in DNA + ATP = 5-phosphomethyl-dUMP in DNA + ADP + H(+). Its function is as follows. Phosphorylates 5-hydroxymethyluracil (5hmdU) into 5-phosphomethyl-2'-deoxyuridine (5- PmdU) on DNA as a step in the pathway leading to thymidine hypermodifications in the viral genome. The phosphate is added internally to the DNA polymer. As a final result of the pathway of hypermodification, 5-aminoethoxy-2'-deoxymethyluridine (5-NeOmdU) substitutes for about 40% of the thymidines in the viral DNA. These modifications probably prevent degradation of viral genome by the host restriction-modification antiviral defense system. In Salmonella phage ViI, this protein is 5-hmdU DNA kinase 1.